Consider the following 417-residue polypeptide: Sterile alpha motif domain-containing protein 14 (417 aa).

A disordered region spans residues 36-302 (QLLAKGRRHR…GGPRQETKCS (267 aa)). Over residues 40 to 49 (KGRRHRPSRS) the composition is skewed to basic residues. Phosphoserine occurs at positions 84 and 108. Positions 138–153 (SGSPPRSAPSSDSSPS) are enriched in low complexity. Residues 159-173 (PRAEPHSEDDSRDAS) show a composition bias toward basic and acidic residues. A phosphoserine mark is found at Ser173 and Ser179. 2 stretches are compositionally biased toward low complexity: residues 244–260 (SGKG…PTCS) and 276–289 (STLS…SSSP). Ser279 bears the Phosphoserine mark. Position 283 is a phosphothreonine (Thr283). An SAM domain is found at 326–389 (WTSQQVGQWL…KRKLKELAAA (64 aa)). The stretch at 375 to 416 (DRALVKRKLKELAAAAEKERKAQEKTAKQREKLRRRENDAKK) forms a coiled coil. The segment at 390-417 (AEKERKAQEKTAKQREKLRRRENDAKKS) is disordered.

In Mus musculus (Mouse), this protein is Sterile alpha motif domain-containing protein 14 (Samd14).